A 133-amino-acid chain; its full sequence is Small ribosomal subunit protein uS15 (133 aa).

Belongs to the universal ribosomal protein uS15 family. As to quaternary structure, part of the 30S ribosomal subunit.

The protein is Small ribosomal subunit protein uS15 of Methanosphaera stadtmanae (strain ATCC 43021 / DSM 3091 / JCM 11832 / MCB-3).